A 155-amino-acid chain; its full sequence is 2-C-methyl-D-erythritol 2,4-cyclodiphosphate synthase (155 aa).

Asp-8 and His-10 together coordinate a divalent metal cation. Residues 8 to 10 (DVH) and 34 to 35 (HS) each bind 4-CDP-2-C-methyl-D-erythritol 2-phosphate. Residue His-42 coordinates a divalent metal cation. 4-CDP-2-C-methyl-D-erythritol 2-phosphate contacts are provided by residues 56-58 (DIG), 61-65 (FPDSD), 100-106 (AQKPKML), 132-135 (TTEE), Phe-139, and Lys-142.

It belongs to the IspF family. In terms of assembly, homotrimer. The cofactor is a divalent metal cation.

The enzyme catalyses 4-CDP-2-C-methyl-D-erythritol 2-phosphate = 2-C-methyl-D-erythritol 2,4-cyclic diphosphate + CMP. The protein operates within isoprenoid biosynthesis; isopentenyl diphosphate biosynthesis via DXP pathway; isopentenyl diphosphate from 1-deoxy-D-xylulose 5-phosphate: step 4/6. Its function is as follows. Involved in the biosynthesis of isopentenyl diphosphate (IPP) and dimethylallyl diphosphate (DMAPP), two major building blocks of isoprenoid compounds. Catalyzes the conversion of 4-diphosphocytidyl-2-C-methyl-D-erythritol 2-phosphate (CDP-ME2P) to 2-C-methyl-D-erythritol 2,4-cyclodiphosphate (ME-CPP) with a corresponding release of cytidine 5-monophosphate (CMP). The protein is 2-C-methyl-D-erythritol 2,4-cyclodiphosphate synthase of Clostridium botulinum (strain Okra / Type B1).